Here is a 325-residue protein sequence, read N- to C-terminus: Undecaprenyl-phosphate 4-deoxy-4-formamido-L-arabinose transferase (325 aa).

2 consecutive transmembrane segments (helical) span residues Leu235–Val255 and Val269–Gly291.

It belongs to the glycosyltransferase 2 family.

The protein localises to the cell inner membrane. The enzyme catalyses UDP-4-deoxy-4-formamido-beta-L-arabinose + di-trans,octa-cis-undecaprenyl phosphate = 4-deoxy-4-formamido-alpha-L-arabinopyranosyl di-trans,octa-cis-undecaprenyl phosphate + UDP. Its pathway is glycolipid biosynthesis; 4-amino-4-deoxy-alpha-L-arabinose undecaprenyl phosphate biosynthesis; 4-amino-4-deoxy-alpha-L-arabinose undecaprenyl phosphate from UDP-4-deoxy-4-formamido-beta-L-arabinose and undecaprenyl phosphate: step 1/2. It participates in bacterial outer membrane biogenesis; lipopolysaccharide biosynthesis. Catalyzes the transfer of 4-deoxy-4-formamido-L-arabinose from UDP to undecaprenyl phosphate. The modified arabinose is attached to lipid A and is required for resistance to polymyxin and cationic antimicrobial peptides. Essential for virulence in insects. This Photorhabdus laumondii subsp. laumondii (strain DSM 15139 / CIP 105565 / TT01) (Photorhabdus luminescens subsp. laumondii) protein is Undecaprenyl-phosphate 4-deoxy-4-formamido-L-arabinose transferase.